Reading from the N-terminus, the 357-residue chain is Glycerol-3-phosphate dehydrogenase [NAD(P)+] (357 aa).

Residues Ser-12, Trp-13, His-33, and Lys-115 each contribute to the NADPH site. 3 residues coordinate sn-glycerol 3-phosphate: Lys-115, Gly-149, and Ser-151. Gly-153 contributes to the NADPH binding site. Residues Lys-204, Asp-263, Arg-274, and Asn-275 each contribute to the sn-glycerol 3-phosphate site. The Proton acceptor role is filled by Lys-204. Arg-274 provides a ligand contact to NADPH. NADPH-binding residues include Leu-307 and Glu-309.

The protein belongs to the NAD-dependent glycerol-3-phosphate dehydrogenase family.

It is found in the cytoplasm. The enzyme catalyses sn-glycerol 3-phosphate + NAD(+) = dihydroxyacetone phosphate + NADH + H(+). The catalysed reaction is sn-glycerol 3-phosphate + NADP(+) = dihydroxyacetone phosphate + NADPH + H(+). The protein operates within membrane lipid metabolism; glycerophospholipid metabolism. Catalyzes the reduction of the glycolytic intermediate dihydroxyacetone phosphate (DHAP) to sn-glycerol 3-phosphate (G3P), the key precursor for phospholipid synthesis. This is Glycerol-3-phosphate dehydrogenase [NAD(P)+] from Treponema denticola (strain ATCC 35405 / DSM 14222 / CIP 103919 / JCM 8153 / KCTC 15104).